Reading from the N-terminus, the 112-residue chain is Cytochrome c (112 aa).

Heme c contacts are provided by C23, C26, H27, and M89.

The protein belongs to the cytochrome c family. In terms of processing, binds 1 heme c group covalently per subunit.

Its subcellular location is the mitochondrion intermembrane space. Functionally, electron carrier protein. The oxidized form of the cytochrome c heme group can accept an electron from the heme group of the cytochrome c1 subunit of cytochrome reductase. Cytochrome c then transfers this electron to the cytochrome oxidase complex, the final protein carrier in the mitochondrial electron-transport chain. The protein is Cytochrome c (CYC1) of Chlamydomonas reinhardtii (Chlamydomonas smithii).